Consider the following 704-residue polypeptide: Elongation factor G 1 (704 aa).

One can recognise a tr-type G domain in the interval 8-291 (ERYRNIGISA…AVIDYLPSPA (284 aa)). Residues 17–24 (AHIDAGKT), 88–92 (DTPGH), and 142–145 (NKMD) contribute to the GTP site.

The protein belongs to the TRAFAC class translation factor GTPase superfamily. Classic translation factor GTPase family. EF-G/EF-2 subfamily.

Its subcellular location is the cytoplasm. Catalyzes the GTP-dependent ribosomal translocation step during translation elongation. During this step, the ribosome changes from the pre-translocational (PRE) to the post-translocational (POST) state as the newly formed A-site-bound peptidyl-tRNA and P-site-bound deacylated tRNA move to the P and E sites, respectively. Catalyzes the coordinated movement of the two tRNA molecules, the mRNA and conformational changes in the ribosome. In Burkholderia thailandensis (strain ATCC 700388 / DSM 13276 / CCUG 48851 / CIP 106301 / E264), this protein is Elongation factor G 1.